We begin with the raw amino-acid sequence, 289 residues long: 33 kDa chaperonin (289 aa).

2 cysteine pairs are disulfide-bonded: cysteine 229-cysteine 231 and cysteine 262-cysteine 265.

Belongs to the HSP33 family. In terms of processing, under oxidizing conditions two disulfide bonds are formed involving the reactive cysteines. Under reducing conditions zinc is bound to the reactive cysteines and the protein is inactive.

The protein resides in the cytoplasm. Functionally, redox regulated molecular chaperone. Protects both thermally unfolding and oxidatively damaged proteins from irreversible aggregation. Plays an important role in the bacterial defense system toward oxidative stress. This Pectobacterium atrosepticum (strain SCRI 1043 / ATCC BAA-672) (Erwinia carotovora subsp. atroseptica) protein is 33 kDa chaperonin.